The sequence spans 79 residues: Cell division protein ZapB (79 aa).

Positions 4–78 (EVFEKLEAKV…LRALLGKMEE (75 aa)) form a coiled coil.

This sequence belongs to the ZapB family. As to quaternary structure, homodimer. The ends of the coiled-coil dimer bind to each other, forming polymers. Interacts with FtsZ.

The protein resides in the cytoplasm. Functionally, non-essential, abundant cell division factor that is required for proper Z-ring formation. It is recruited early to the divisome by direct interaction with FtsZ, stimulating Z-ring assembly and thereby promoting cell division earlier in the cell cycle. Its recruitment to the Z-ring requires functional FtsA or ZipA. The protein is Cell division protein ZapB of Pectobacterium carotovorum subsp. carotovorum (strain PC1).